The primary structure comprises 941 residues: RNA-binding protein 4F (941 aa).

Positions 1 to 13 are enriched in basic and acidic residues; that stretch reads MDADKQLERQLEK. The interval 1 to 149 is disordered; sequence MDADKQLERQ…DSDNAGGGNQ (149 aa). The span at 14-32 shows a compositional bias: acidic residues; sequence ELDEMPAEDLDDDAYDEYD. A compositionally biased stretch (polar residues) spans 42–52; sequence GSPQQGHSESP. A Phosphoserine modification is found at S43. The span at 55–65 shows a compositional bias: basic and acidic residues; the sequence is EEEHKSEELRQ. A compositionally biased stretch (acidic residues) spans 87–98; it reads SSDDEPSVEETE. Residues 111-134 show a composition bias toward low complexity; that stretch reads DSSSSSDDVGVIEGSELESNSEVS. The residue at position 153 (S153) is a Phosphoserine. The disordered stretch occupies residues 629 to 713; sequence RSRIKPNSQS…GPANAEAKES (85 aa). The span at 671-680 shows a compositional bias: low complexity; sequence EQQQQQQQQQ. Phosphoserine is present on S713. Y717 is modified (phosphotyrosine). Phosphoserine is present on S718. Residues 724–801 enclose the RRM domain; sequence NKIFVRNLHP…MNISVAISNP (78 aa). Composition is skewed to basic and acidic residues over residues 862 to 902, 913 to 922, and 930 to 941; these read EANG…KGDD, QKGDEKKEEE, and SNDDFRKLFLKD. A disordered region spans residues 862–941; the sequence is EANGEEQKGD…DDFRKLFLKD (80 aa).

Its subcellular location is the cytoplasm. May be involved in gene regulation during development. Binds RNA. This is RNA-binding protein 4F from Drosophila melanogaster (Fruit fly).